A 343-amino-acid polypeptide reads, in one-letter code: Heat-inducible transcription repressor HrcA (343 aa).

It belongs to the HrcA family.

Negative regulator of class I heat shock genes (grpE-dnaK-dnaJ and groELS operons). Prevents heat-shock induction of these operons. This Mycobacterium avium (strain 104) protein is Heat-inducible transcription repressor HrcA.